The following is a 361-amino-acid chain: S-adenosylmethionine-dependent nucleotide dehydratase RSAD2 (361 aa).

One can recognise a Radical SAM core domain in the interval 69-289; sequence PTTPTSVNYH…LERHKEVSCL (221 aa). Residues Cys83, Cys87, and Cys90 each contribute to the [4Fe-4S] cluster site. Lys197 carries the N6-acetyllysine modification. Lys206 participates in a covalent cross-link: Glycyl lysine isopeptide (Lys-Gly) (interchain with G-Cter in ubiquitin).

This sequence belongs to the radical SAM superfamily. RSAD2 family. In terms of assembly, homodimer. Interacts with IRAK1 and TRAF6. Interacts with FPPS. Interacts with HADHB. Interacts (via C-terminus) with VAPA/VAP33 (via C-terminus). As to quaternary structure, (Microbial infection) Interacts with human cytomegalovirus/HHV-5 protein vMIA/UL37; this interaction results in RSAD2/viperin relocalization from the endoplasmic reticulum to the mitochondria. (Microbial infection) Interacts (via N-terminus) with enterovirus A71 protein 2C; this interaction inhibits viral replication. In terms of assembly, (Microbial infection) Interacts with herpes simplex virus 1/HHV-1 glycoprotein D; this interaction inhibits HHV-1 replication by facilitating IRF7-mediated IFN-beta production. It depends on [4Fe-4S] cluster as a cofactor. In terms of processing, acetylated by HAT1. HAT1-mediated acetylation of Lys-197 in turn recruits UBE4A that stimulates RSAD2 polyubiquitination leading to proteasomal degradation. Post-translationally, 'Lys-6'-linked polyubiquitination at Lys-206 leads to RSAD2 protein degradation.

The protein resides in the endoplasmic reticulum membrane. Its subcellular location is the golgi apparatus. The protein localises to the endoplasmic reticulum. It localises to the lipid droplet. It is found in the mitochondrion. The protein resides in the mitochondrion inner membrane. Its subcellular location is the mitochondrion outer membrane. The enzyme catalyses CTP + AH2 + S-adenosyl-L-methionine = 3'-deoxy-3',4'-didehydro-CTP + 5'-deoxyadenosine + L-methionine + A + H2O + H(+). With respect to regulation, IRAK1 and TRAF6 synergistically activate RSAD2 increasing its activity with CTP as substrate about 10-fold. Interferon-inducible antiviral protein which plays a major role in the cell antiviral state induced by type I and type II interferon. Catalyzes the conversion of cytidine triphosphate (CTP) to 3'-deoxy-3',4'-didehydro-CTP (ddhCTP) via a SAM-dependent radical mechanism. In turn, ddhCTP acts as a chain terminator for the RNA-dependent RNA polymerases from multiple viruses and directly inhibits viral replication. Therefore, inhibits a wide range of DNA and RNA viruses, including human cytomegalovirus (HCMV), hepatitis C virus (HCV), west Nile virus (WNV), dengue virus, sindbis virus, influenza A virus, sendai virus, vesicular stomatitis virus (VSV), zika virus, and human immunodeficiency virus (HIV-1). Also promotes TLR7 and TLR9-dependent production of IFN-beta production in plasmacytoid dendritic cells (pDCs) by facilitating 'Lys-63'-linked ubiquitination of IRAK1 by TRAF6. Plays a role in CD4+ T-cells activation and differentiation. Facilitates T-cell receptor (TCR)-mediated GATA3 activation and optimal T-helper 2 (Th2) cytokine production by modulating NFKB1 and JUNB activities. Can inhibit secretion of soluble proteins. This chain is S-adenosylmethionine-dependent nucleotide dehydratase RSAD2, found in Homo sapiens (Human).